Here is a 170-residue protein sequence, read N- to C-terminus: MSAAPSELHEVFLNPGEFHFGESNTRISTLLGSCVSITLWHPRKRIGGMCHYMLTERKRPPNAALDGRFGSEAFELFLQHVAAAGTRPGEYQAKLFGGANMLTGPTGKQMDIGPRNVALGRQLLAANHIALMVEHVGGSGRRKLHFDVWSGDVWLAFPQGADAEIRNAHG.

It belongs to the CheD family.

The catalysed reaction is L-glutaminyl-[protein] + H2O = L-glutamyl-[protein] + NH4(+). In terms of biological role, probably deamidates glutamine residues to glutamate on methyl-accepting chemotaxis receptors (MCPs), playing an important role in chemotaxis. This chain is Probable chemoreceptor glutamine deamidase CheD 3, found in Dechloromonas aromatica (strain RCB).